The following is a 555-amino-acid chain: Formate--tetrahydrofolate ligase (555 aa).

Residue 65–72 coordinates ATP; that stretch reads TPAGEGKS.

Belongs to the formate--tetrahydrofolate ligase family.

The enzyme catalyses (6S)-5,6,7,8-tetrahydrofolate + formate + ATP = (6R)-10-formyltetrahydrofolate + ADP + phosphate. It participates in one-carbon metabolism; tetrahydrofolate interconversion. This Staphylococcus aureus (strain MRSA252) protein is Formate--tetrahydrofolate ligase.